The sequence spans 335 residues: Methionine import ATP-binding protein MetN (335 aa).

The region spanning 2–241 is the ABC transporter domain; that stretch reads IQFQRLHKSY…PQHPTTRRFV (240 aa). 38-45 serves as a coordination point for ATP; sequence GHSGAGKS.

The protein belongs to the ABC transporter superfamily. Methionine importer (TC 3.A.1.24) family. In terms of assembly, the complex is composed of two ATP-binding proteins (MetN), two transmembrane proteins (MetI) and a solute-binding protein (MetQ).

It is found in the cell inner membrane. The catalysed reaction is L-methionine(out) + ATP + H2O = L-methionine(in) + ADP + phosphate + H(+). It catalyses the reaction D-methionine(out) + ATP + H2O = D-methionine(in) + ADP + phosphate + H(+). Functionally, part of the ABC transporter complex MetNIQ involved in methionine import. Responsible for energy coupling to the transport system. The chain is Methionine import ATP-binding protein MetN from Xanthomonas campestris pv. campestris (strain 8004).